Here is a 600-residue protein sequence, read N- to C-terminus: MSTLTRFSVRPLATMTRHLADVASGRAEPDLVIKGARVLSTYSERILPDREVWISGGRIAAVKPAGSYRGSAATIYDAAGGLIAPGLVDPHIHIESSMVTACSYAEAALLNGTTTIFCDSHEIGNVMDVAGVEAMLEDARQAPSSIFLTVPSTVPATSPELETAGGDLTAEKIAALFDKWPEAVALGEKMDFVQVAMGDERSHAILAAALERGRPVSGHVYGREFVAAYAASGVTDTHEAIDREIADDLLEAGIWLFLRGGPPTTPWHSLPQAIKTITELGASHKRIAVCTDDRDADDLLLFGLDWVTREAMKAGMKPEQAWAMGSLHGATRFGLEGDIGGLGGGRRADLVLLDDGFKPVNTWYGGELVVENRKITPLLDTALSNRYRYPEAAYHTVKLPKAVKLTPELPTARVVAHTIRTELPGITLGHERITLEPSNHWQDHFDRHGLCFVAVVERHGKSAGNVAHGLLSNFNLKRGAVASSVGHDSHNIIVAGTNEADMQVALRAIEEAQGGVCVVMDGKVTAMVPLPIAGLLSDKRVTEVAEEVKALKVEWEKAGCSIPYMGFNLIPLSVIPEIRITDKGLVLVPEMEIVQLFEAA.

The protein belongs to the metallo-dependent hydrolases superfamily. Adenine deaminase family. It depends on Mn(2+) as a cofactor.

The catalysed reaction is adenine + H2O + H(+) = hypoxanthine + NH4(+). This chain is Adenine deaminase, found in Chelativorans sp. (strain BNC1).